The following is a 161-amino-acid chain: Type IV major fimbrial protein FimA (161 aa).

Residues 1 to 7 constitute a propeptide, leader sequence; the sequence is MKSLQKG. Phe8 carries the post-translational modification N-methylphenylalanine. A helical membrane pass occupies residues 8–28; sequence FTLIELMIVVAIIGILAAFAI. Cysteines 63 and 106 form a disulfide.

The protein belongs to the N-Me-Phe pilin family. The pili are polar flexible filaments of about 5.4 nanometers diameter and 2.5 micrometers average length; they consist of only a single polypeptide chain arranged in a helical configuration of five subunits per turn in the assembled pilus.

The protein resides in the fimbrium. Its subcellular location is the membrane. Major component of the type IV fimbriae that plays an essential role in twitching motility, natural transformation, and protease secretion. The protein is Type IV major fimbrial protein FimA (fimA) of Dichelobacter nodosus (Bacteroides nodosus).